The primary structure comprises 355 residues: 3-dehydroquinate synthase (355 aa).

NAD(+) contacts are provided by residues 105 to 109 (GVVGD), 129 to 130 (TS), Lys-142, Lys-151, and 169 to 172 (TLKT). Zn(2+) contacts are provided by Glu-184, His-246, and His-263.

It belongs to the sugar phosphate cyclases superfamily. Dehydroquinate synthase family. It depends on NAD(+) as a cofactor. Co(2+) serves as cofactor. The cofactor is Zn(2+).

It localises to the cytoplasm. The enzyme catalyses 7-phospho-2-dehydro-3-deoxy-D-arabino-heptonate = 3-dehydroquinate + phosphate. The protein operates within metabolic intermediate biosynthesis; chorismate biosynthesis; chorismate from D-erythrose 4-phosphate and phosphoenolpyruvate: step 2/7. Catalyzes the conversion of 3-deoxy-D-arabino-heptulosonate 7-phosphate (DAHP) to dehydroquinate (DHQ). This chain is 3-dehydroquinate synthase, found in Streptococcus agalactiae serotype V (strain ATCC BAA-611 / 2603 V/R).